A 284-amino-acid chain; its full sequence is 2,3,4,5-tetrahydropyridine-2,6-dicarboxylate N-succinyltransferase (284 aa).

Residues Arg111 and Asp148 each contribute to the substrate site.

This sequence belongs to the transferase hexapeptide repeat family. Homotrimer.

The protein localises to the cytoplasm. It carries out the reaction (S)-2,3,4,5-tetrahydrodipicolinate + succinyl-CoA + H2O = (S)-2-succinylamino-6-oxoheptanedioate + CoA. The protein operates within amino-acid biosynthesis; L-lysine biosynthesis via DAP pathway; LL-2,6-diaminopimelate from (S)-tetrahydrodipicolinate (succinylase route): step 1/3. The protein is 2,3,4,5-tetrahydropyridine-2,6-dicarboxylate N-succinyltransferase of Chelativorans sp. (strain BNC1).